A 260-amino-acid chain; its full sequence is Acetylglutamate kinase (260 aa).

Substrate-binding positions include 45-46, Arg67, and Asn159; that span reads GG.

The protein belongs to the acetylglutamate kinase family. ArgB subfamily.

The protein localises to the cytoplasm. The catalysed reaction is N-acetyl-L-glutamate + ATP = N-acetyl-L-glutamyl 5-phosphate + ADP. It functions in the pathway amino-acid biosynthesis; L-arginine biosynthesis; N(2)-acetyl-L-ornithine from L-glutamate: step 2/4. In terms of biological role, catalyzes the ATP-dependent phosphorylation of N-acetyl-L-glutamate. This is Acetylglutamate kinase from Colwellia psychrerythraea (strain 34H / ATCC BAA-681) (Vibrio psychroerythus).